A 338-amino-acid chain; its full sequence is Ferredoxin--NADP reductase (338 aa).

Asp-38, Gln-46, Tyr-51, Val-91, Phe-125, Asp-291, and Thr-331 together coordinate FAD.

Belongs to the ferredoxin--NADP reductase type 2 family. As to quaternary structure, homodimer. FAD is required as a cofactor.

It carries out the reaction 2 reduced [2Fe-2S]-[ferredoxin] + NADP(+) + H(+) = 2 oxidized [2Fe-2S]-[ferredoxin] + NADPH. The chain is Ferredoxin--NADP reductase from Orientia tsutsugamushi (strain Ikeda) (Rickettsia tsutsugamushi).